Reading from the N-terminus, the 538-residue chain is Low affinity inorganic phosphate transporter 3 (538 aa).

The Cytoplasmic portion of the chain corresponds to 1-24; that stretch reads MAKDQLQVLNALDVAKTQLYHFTA. The helical transmembrane segment at 25–45 threads the bilayer; sequence IVIAGMGFFTDAYDLFCISLV. At 46–70 the chain is on the extracellular side; that stretch reads TKLLGRIYYFHEGAPKPGILPSGIS. The chain crosses the membrane as a helical span at residues 71–91; sequence AAVNGVAFIGTLSGQLFFGWL. The Cytoplasmic portion of the chain corresponds to 92-99; sequence GDKLGRKK. The chain crosses the membrane as a helical span at residues 100-120; the sequence is VYGMTLMLMVICSIACGLSFG. Over 121–122 the chain is Extracellular; that stretch reads KT. A helical membrane pass occupies residues 123–143; sequence ANGVIATLCFFRFWLGFGIGG. Residues 144–164 are Cytoplasmic-facing; that stretch reads DYPLSATIMSEYANKKTRGAF. The chain crosses the membrane as a helical span at residues 165–185; sequence IAAVFAMQGFGILAGGIVALI. Residues 186-211 are Extracellular-facing; that stretch reads VSAGFKNAYPAPTYSAHGKDSTPPEA. The helical transmembrane segment at 212 to 232 threads the bilayer; the sequence is DYVWRIIVMIGALPALLTYYW. Residues 233–292 lie on the Cytoplasmic side of the membrane; the sequence is RMKMPETARYTALVAKNTVKAAADMSKVLNVEIEEDKATVEKIEENGNSFGLFSKEFLRR. Residues 293–313 traverse the membrane as a helical segment; the sequence is HGLHLLGTTSTWFLLDIAFYS. The Extracellular portion of the chain corresponds to 314–345; sequence QNLFQKDIFSKIGWIPPPETMNALDEVFRIAR. The helical transmembrane segment at 346-366 threads the bilayer; it reads AQTLIALCSTVPGYWFTVAFI. The Cytoplasmic portion of the chain corresponds to 367–371; sequence DKMGR. A helical transmembrane segment spans residues 372 to 392; sequence FAIQLMGSFFMTVFMFALAIP. At 393 to 402 the chain is on the extracellular side; the sequence is YDHWTKKENR. Residues 403-423 traverse the membrane as a helical segment; sequence IGFVIMYSLTFFFANFGPNAT. Residues 424-442 lie on the Cytoplasmic side of the membrane; the sequence is TFVVPAEIFPARLRSTCHG. Residues 443–463 traverse the membrane as a helical segment; sequence ISAAAGKAGAIVGAFGFLYAA. The Extracellular portion of the chain corresponds to 464-483; sequence QSTDPKKVDAGYPTGIGVKN. The helical transmembrane segment at 484–504 threads the bilayer; sequence ALIVLGCVNFLGMLSTLLVPE. The Cytoplasmic segment spans residues 505–538; it reads SKGKSLEEMSKENEGEEENYGTETKGENAQTVPV. Basic and acidic residues predominate over residues 506–517; it reads KGKSLEEMSKEN. The disordered stretch occupies residues 506-538; that stretch reads KGKSLEEMSKENEGEEENYGTETKGENAQTVPV.

Belongs to the major facilitator superfamily. Phosphate:H(+) symporter (TC 2.A.1.9) family. As to expression, expressed at low levels in non-mycorrhized roots.

Its subcellular location is the cell membrane. It catalyses the reaction phosphate(in) + H(+)(in) = phosphate(out) + H(+)(out). Low-affinity transporter for external inorganic phosphate (Pi) probably involved in the acquisition of phosphate released by arbuscular mycorrhizal (AM) fungi during AM symbiosis. This chain is Low affinity inorganic phosphate transporter 3, found in Petunia hybrida (Petunia).